Here is a 394-residue protein sequence, read N- to C-terminus: GPI mannosyltransferase 2 (394 aa).

9 helical membrane passes run 2 to 22 (LWKLLRLFIIIKLIQLAIIYF), 47 to 67 (YYNVIITTILNKLIVWDSVYF), 104 to 124 (LTSILISNLCHFASVITLYYL), 132 to 152 (FGLVSGLLMIISPAGVFLTGN), 185 to 205 (SITNILGYIISGIFCAINFTV), 232 to 252 (IILSIITGSILFMTFLMTNIY), 293 to 313 (IPNFILVLPVLIFNIYSLGYM), 323 to 343 (LLPLIVINGLIVVGGTFFWNI), and 371 to 391 (YAIGYCIVWNFVQTGLFAAFL).

It belongs to the PIGV family.

Its subcellular location is the endoplasmic reticulum membrane. Its pathway is glycolipid biosynthesis; glycosylphosphatidylinositol-anchor biosynthesis. Its function is as follows. Mannosyltransferase involved in glycosylphosphatidylinositol-anchor biosynthesis. Transfers the second mannose to the glycosylphosphatidylinositol during GPI precursor assembly. The sequence is that of GPI mannosyltransferase 2 (GPI18) from Candida albicans (strain SC5314 / ATCC MYA-2876) (Yeast).